A 37-amino-acid polypeptide reads, in one-letter code: MEVNILAFIATALFILVPTAFLLIIYVKTVGQSDSFE.

Residues 5–25 (ILAFIATALFILVPTAFLLII) traverse the membrane as a helical segment.

It belongs to the PsbM family. As to quaternary structure, PSII is composed of 1 copy each of membrane proteins PsbA, PsbB, PsbC, PsbD, PsbE, PsbF, PsbH, PsbI, PsbJ, PsbK, PsbL, PsbM, PsbT, PsbX, PsbY, PsbZ, Psb30/Ycf12, at least 3 peripheral proteins of the oxygen-evolving complex and a large number of cofactors. It forms dimeric complexes.

The protein localises to the plastid. It localises to the chloroplast thylakoid membrane. In terms of biological role, one of the components of the core complex of photosystem II (PSII). PSII is a light-driven water:plastoquinone oxidoreductase that uses light energy to abstract electrons from H(2)O, generating O(2) and a proton gradient subsequently used for ATP formation. It consists of a core antenna complex that captures photons, and an electron transfer chain that converts photonic excitation into a charge separation. This subunit is found at the monomer-monomer interface. This is Photosystem II reaction center protein M from Pelargonium hortorum (Common geranium).